Consider the following 239-residue polypeptide: Uridylate kinase (239 aa).

ATP is bound at residue 10 to 13 (KISG). The tract at residues 18–23 (GESGYG) is involved in allosteric activation by GTP. Glycine 52 serves as a coordination point for UMP. Residues glycine 53 and arginine 57 each coordinate ATP. Residues aspartate 72 and 133–140 (TGNPYFTT) contribute to the UMP site. Residues threonine 160, tyrosine 166, and aspartate 169 each coordinate ATP.

It belongs to the UMP kinase family. Homohexamer.

The protein resides in the cytoplasm. The enzyme catalyses UMP + ATP = UDP + ADP. It functions in the pathway pyrimidine metabolism; CTP biosynthesis via de novo pathway; UDP from UMP (UMPK route): step 1/1. With respect to regulation, allosterically activated by GTP. Inhibited by UTP. Catalyzes the reversible phosphorylation of UMP to UDP. In Chlorobaculum tepidum (strain ATCC 49652 / DSM 12025 / NBRC 103806 / TLS) (Chlorobium tepidum), this protein is Uridylate kinase.